The primary structure comprises 227 residues: GRF-interacting factor 1 (227 aa).

Residues 186-227 (RSGSGAKEGSTSLSVDVRGGTSSGAQSGDGEYLKVGTEEEGS) form a disordered region.

It belongs to the SS18 family. In terms of assembly, interacts with several GRFs. Interacts with GRF10. Interacts with GRF1. In terms of tissue distribution, expressed in shoots, aerial roots, ears and tassels. Expressed in the shoot apical meristem (SAM), young leaf primordia, leaf margins, inflorescence meristem, floral meristem and spikelet meristem.

Its function is as follows. Transcription coactivator that plays a role in the regulation of meristematic function in leaves, stems and inflorescences. Regulates shoot architecture and meristem determinacy. Binds to the inflorescence architecture gene UB3 (unbranched3). Regulates the expression of several genes involved in inflorescence architecture. Component of a network formed by the microRNA396 (miRNA396), the GRFs and their interacting factors (GIFs) acting in the regulation of meristem function, at least partially through the control of cell proliferation. Associates with the core SWI/SNF chromatin-remodeling complex and specific GRFs to tightly regulate the transition between cell division and cell expansion in growing leaves. This is GRF-interacting factor 1 from Zea mays (Maize).